A 374-amino-acid chain; its full sequence is SH2 domain-containing protein 2A (374 aa).

Residues 116–207 (WFHGFITRRE…PYGEILTQPL (92 aa)) enclose the SH2 domain. The interval 213–232 (EPAGLSLRADSDSGSKRQDP) is disordered. The span at 221 to 232 (ADSDSGSKRQDP) shows a compositional bias: basic and acidic residues. Ser-237 bears the Phosphoserine mark. Residues 241–301 (QQGQAQASGH…QAPPINPIYQ (61 aa)) are disordered. Over residues 256–266 (ASQQKATSQAS) the composition is skewed to polar residues. An SH3-binding motif is present at residues 267-273 (RPRPPIP). The span at 268 to 279 (PRPPIPAKPQLP) shows a compositional bias: pro residues. A Phosphoserine modification is found at Ser-316. Disordered stretches follow at residues 321–340 (PSNI…IGHP) and 353–374 (GQVR…GSPS).

As to quaternary structure, interacts with KDR. Interacts with p56-LCK, TXK and ITK. Phosphorylated on tyrosine residues upon TCR-stimulation. Expression limited to tissues of the immune system and, in particular, activated T-cells and natural killer cells. Expressed in the thymus, lymph node, and to a lesser extent, in the spleen and bone marrow. According to PubMed:10553045, also expressed in the lung.

It localises to the cytoplasm. It is found in the cell membrane. Could be a T-cell-specific adapter protein involved in the control of T-cell activation. May play a role in p56-LCK-mediated T-cell signaling. Could be involved in the regulation of responses to T-cell activation stimuli, specifically proliferation and lymphokine production. Interactions with ITK and TXK may provide important biochemical links of these two important kinases with other components in the T-cell activation machinery. This Mus musculus (Mouse) protein is SH2 domain-containing protein 2A (Sh2d2a).